The primary structure comprises 457 residues: ATP synthase subunit beta (457 aa).

147–154 lines the ATP pocket; the sequence is GGAGVGKT.

Belongs to the ATPase alpha/beta chains family. F-type ATPases have 2 components, CF(1) - the catalytic core - and CF(0) - the membrane proton channel. CF(1) has five subunits: alpha(3), beta(3), gamma(1), delta(1), epsilon(1). CF(0) has three main subunits: a(1), b(2) and c(9-12). The alpha and beta chains form an alternating ring which encloses part of the gamma chain. CF(1) is attached to CF(0) by a central stalk formed by the gamma and epsilon chains, while a peripheral stalk is formed by the delta and b chains.

It localises to the cell inner membrane. The catalysed reaction is ATP + H2O + 4 H(+)(in) = ADP + phosphate + 5 H(+)(out). In terms of biological role, produces ATP from ADP in the presence of a proton gradient across the membrane. The catalytic sites are hosted primarily by the beta subunits. This is ATP synthase subunit beta from Histophilus somni (strain 2336) (Haemophilus somnus).